We begin with the raw amino-acid sequence, 880 residues long: Alanine--tRNA ligase (880 aa).

4 residues coordinate Zn(2+): histidine 567, histidine 571, cysteine 669, and histidine 673.

It belongs to the class-II aminoacyl-tRNA synthetase family. Zn(2+) serves as cofactor.

The protein localises to the cytoplasm. The enzyme catalyses tRNA(Ala) + L-alanine + ATP = L-alanyl-tRNA(Ala) + AMP + diphosphate. Its function is as follows. Catalyzes the attachment of alanine to tRNA(Ala) in a two-step reaction: alanine is first activated by ATP to form Ala-AMP and then transferred to the acceptor end of tRNA(Ala). Also edits incorrectly charged Ser-tRNA(Ala) and Gly-tRNA(Ala) via its editing domain. This is Alanine--tRNA ligase from Bacillus anthracis.